The primary structure comprises 78 residues: Small ribosomal subunit protein bS20 (78 aa).

The protein belongs to the bacterial ribosomal protein bS20 family.

Functionally, binds directly to 16S ribosomal RNA. The sequence is that of Small ribosomal subunit protein bS20 from Streptococcus pneumoniae serotype 2 (strain D39 / NCTC 7466).